The sequence spans 137 residues: Pro-corazonin (137 aa).

Residues M1–A20 form the signal peptide. Q21 carries the pyrrolidone carboxylic acid modification. N31 is modified (asparagine amide). A propeptide spanning residues F68–L137 is cleaved from the precursor.

It belongs to the corazonin family.

The protein resides in the secreted. Its function is as follows. Cardioactive peptide. Corazonin is probably involved in the physiological regulation of the heart beat. The sequence is that of Pro-corazonin from Aedes aegypti (Yellowfever mosquito).